Here is a 407-residue protein sequence, read N- to C-terminus: Putative glucose/galactose transporter (407 aa).

The next 12 membrane-spanning stretches (helical) occupy residues 11-31 (GSLT…DILI), 47-67 (LIQF…GNVI), 70-90 (IGYP…CALF), 96-116 (FGSY…IVCL), 139-159 (VQAF…LLIF), 180-200 (VQMP…IMYL), 225-245 (FVFG…IGSF), 263-283 (HYLV…SVLM), 300-320 (IVLI…ALTF), 321-341 (VGFF…LNLG), 349-369 (GVIS…GAVT), and 378-398 (NLLY…FFAL).

It belongs to the major facilitator superfamily. FHS transporter (TC 2.A.1.7) family.

It is found in the cell inner membrane. Functionally, intake of glucose and galactose. This chain is Putative glucose/galactose transporter (gluP), found in Helicobacter pylori (strain ATCC 700392 / 26695) (Campylobacter pylori).